The primary structure comprises 279 residues: 3-methyl-2-oxobutanoate hydroxymethyltransferase (279 aa).

Positions 44 and 83 each coordinate Mg(2+). 3-methyl-2-oxobutanoate-binding positions include D44–S45, D83, and K112. Residue E114 participates in Mg(2+) binding. Catalysis depends on E181, which acts as the Proton acceptor.

The protein belongs to the PanB family. As to quaternary structure, homodecamer; pentamer of dimers. Mg(2+) serves as cofactor.

Its subcellular location is the cytoplasm. It carries out the reaction 3-methyl-2-oxobutanoate + (6R)-5,10-methylene-5,6,7,8-tetrahydrofolate + H2O = 2-dehydropantoate + (6S)-5,6,7,8-tetrahydrofolate. The protein operates within cofactor biosynthesis; coenzyme A biosynthesis. Catalyzes the reversible reaction in which hydroxymethyl group from 5,10-methylenetetrahydrofolate is transferred onto alpha-ketoisovalerate to form ketopantoate. The protein is 3-methyl-2-oxobutanoate hydroxymethyltransferase of Nitrosopumilus maritimus (strain SCM1).